Here is a 286-residue protein sequence, read N- to C-terminus: Serine carboxypeptidase-like (286 aa).

Residue S4 is part of the active site. Disulfide bonds link C83/C98 and C121/C126. D193 is a catalytic residue. C196 serves as a coordination point for substrate. Residue N227 is glycosylated (N-linked (GlcNAc...) asparagine). H250 is a catalytic residue.

It belongs to the peptidase S10 family.

Involved in degradation of small peptides. This is Serine carboxypeptidase-like from Pisum sativum (Garden pea).